Reading from the N-terminus, the 223-residue chain is Killer cell lectin-like receptor subfamily B member 1B allele A (223 aa).

Topologically, residues 1-45 (MDTAVVYADLHLARTGEPKREPPPSLSPDTCQCPRWHRLALKLGC) are cytoplasmic. Residues 5-10 (VVYADL) carry the ITIM motif motif. Residues 31–34 (CQCP) carry the LCK-binding motif motif. The chain crosses the membrane as a helical; Signal-anchor for type II membrane protein span at residues 46–66 (ACLILLVLSVIGLGVLVLTLL). The Extracellular segment spans residues 67-223 (QKPLIQNSPA…LKRESTCNDS (157 aa)). In terms of domain architecture, C-type lectin spans 101–211 (HQDKCFHVSQ…CDSDNIWICQ (111 aa)). Cystine bridges form between cysteine 122–cysteine 210 and cysteine 189–cysteine 202.

In terms of assembly, homodimer; disulfide-linked. Interacts with tyrosine kinase LCK. Binds PTPN6/SHP-1 in a phosphorylation-dependent manner. In terms of tissue distribution, expressed in a subset of natural killer cells.

It localises to the membrane. Its function is as follows. Receptor for CLEC2D/OCIL. Ligand-binding contributes to inhibition of cytotoxic natural killer (NK) cells. May mediate MHC class I-independent 'missing-self' recognition of allografts, tumor cells and virus-infected cells. This Rattus norvegicus (Rat) protein is Killer cell lectin-like receptor subfamily B member 1B allele A.